A 91-amino-acid polypeptide reads, in one-letter code: Small ribosomal subunit protein bS20 (91 aa).

Basic and acidic residues predominate over residues 1 to 18 (MPLHKSAEKRLRQSEKRN). Residues 1 to 24 (MPLHKSAEKRLRQSEKRNVRNRAR) form a disordered region.

Belongs to the bacterial ribosomal protein bS20 family.

In terms of biological role, binds directly to 16S ribosomal RNA. This is Small ribosomal subunit protein bS20 from Chlorobium phaeobacteroides (strain DSM 266 / SMG 266 / 2430).